A 149-amino-acid polypeptide reads, in one-letter code: Probable ubiquitin-conjugating enzyme E2 W (149 aa).

The UBC core domain occupies 4–149 (RYAKRLQKEL…VRWMFHDDTV (146 aa)). Cys-88 (glycyl thioester intermediate) is an active-site residue.

It belongs to the ubiquitin-conjugating enzyme family.

The enzyme catalyses S-ubiquitinyl-[E1 ubiquitin-activating enzyme]-L-cysteine + [E2 ubiquitin-conjugating enzyme]-L-cysteine = [E1 ubiquitin-activating enzyme]-L-cysteine + S-ubiquitinyl-[E2 ubiquitin-conjugating enzyme]-L-cysteine.. It catalyses the reaction S-ubiquitinyl-[E1 ubiquitin-activating enzyme]-L-cysteine + [acceptor protein]-N-terminal-amino acid = [E1 ubiquitin-activating enzyme]-L-cysteine + N-terminal-ubiquitinyl-[acceptor protein].. It participates in protein modification; protein ubiquitination. Catalyzes the covalent attachment of ubiquitin to other proteins. The sequence is that of Probable ubiquitin-conjugating enzyme E2 W (ube2w) from Dictyostelium discoideum (Social amoeba).